A 2541-amino-acid polypeptide reads, in one-letter code: Talin-1 (2541 aa).

In terms of domain architecture, FERM spans 86–403; that stretch reads RPLKIRMLDG…GYIDIILKKK (318 aa). Threonine 167 bears the Phosphothreonine mark. Residues 280 to 435 are interaction with LAYN; sequence FQAHKNCGQM…PKKSTVLQQQ (156 aa). Residues serine 405, serine 425, serine 446, serine 620, and serine 729 each carry the phosphoserine modification. The tract at residues 482-655 is helical bundle R1; it reads RGHMPPLTSA…QASGELLQQI (174 aa). The interval 656–786 is helical bundle R2; sequence GESDTDPHFQ…ALNELLQHVK (131 aa). Positions 787 to 911 are helical bundle R3; it reads AHATGAGPAG…NAAAQNAIKK (125 aa). The tract at residues 913–1044 is helical bundle R4; sequence LVQRLEHAAK…RTAAQKAQEA (132 aa). Residue serine 1021 is modified to Phosphoserine. The segment at 1046–1206 is helical bundle R5; sequence GPLEMDSALS…NRCVSCLPGQ (161 aa). Tyrosine 1116 carries the phosphotyrosine modification. Position 1142 is a phosphothreonine (threonine 1142). Serine 1201 and serine 1225 each carry phosphoserine. A helical bundle R6 region spans residues 1207-1357; sequence RDVDNALRAV…QLITMCTQQA (151 aa). Position 1263 is a phosphothreonine (threonine 1263). Phosphoserine occurs at positions 1323 and 1328. The tract at residues 1327 to 1948 is interaction with SYNM; that stretch reads ASPNLKSQLA…CSPSDVYTKK (622 aa). Residues 1358–1453 form a helical bundle R7A; Interaction with KANK1 region; sequence PGQKECDNAL…AYLVGVSDPN (96 aa). The interaction with VCL and F-actin stretch occupies residues 1359-1659; that stretch reads GQKECDNALR…SMRDKAPGQL (301 aa). Residues 1461–1580 are helical bundle R8; the sequence is LVEPTQFARA…NLSAFASNPE (120 aa). Lysine 1544 is subject to N6-acetyllysine. The segment at 1581-1653 is helical bundle R7B; Interaction with KANK1; that stretch reads FSSVPAQISP…IKKLITSMRD (73 aa). The segment at 1655-1822 is helical bundle R9; the sequence is APGQLECETA…TLNEAASAAG (168 aa). The tract at residues 1823–1973 is helical bundle R10; the sequence is VVGGMVDSIT…VLAALQAGNR (151 aa). Phosphoserine is present on serine 1849. Position 1855 is a phosphothreonine (threonine 1855). Residue serine 1878 is modified to Phosphoserine. A helical bundle R11 region spans residues 1974 to 2140; sequence GTQACITAAS…TVKAVEDEAT (167 aa). Lysine 2031 is subject to N6-acetyllysine. At serine 2040 the chain carries Phosphoserine. Lysine 2115 carries the N6-acetyllysine modification. A helical bundle R12 region spans residues 2141–2294; sequence KGTRALEATT…QAAEAMKGTE (154 aa). Residues 2293 to 2533 form the I/LWEQ domain; that stretch reads TEWVDPEDPT…QIRQQQYKFL (241 aa). The helical bundle R13 stretch occupies residues 2300–2482; the sequence is DPTVIAENEL…AAQKAAAFED (183 aa).

In terms of assembly, part of a complex composed of THSD1, PTK2/FAK1, TLN1 and VCL. Interacts with THSD1; this promotes interaction with PTK2/FAK1 and VCL. Interacts with NRAP and LAYN. Interacts with SYNM. Interacts with ITGB1; the interaction is prevented by competitive binding of ITGB1BP1. Binds with high affinity to VCL and with low affinity to integrins. Interacts with APBB1IP; this inhibits VCL binding. Interacts with PTK2/FAK1. Interacts with PIP5K1C. Interacts with F-actin. Interacts with SVEP1. Interacts (via R7 domain) with KANK1 or KANK2 (via KN motif); this interaction likely initiates the assembly of cortical microtubule stabilization complexes (CMSCs) at the vicinity of focal adhesions.

The protein localises to the cell projection. It is found in the ruffle membrane. Its subcellular location is the cytoplasm. The protein resides in the cytoskeleton. It localises to the cell surface. The protein localises to the cell junction. It is found in the focal adhesion. Its function is as follows. High molecular weight cytoskeletal protein concentrated at regions of cell-matrix and cell-cell contacts. Involved in connections of major cytoskeletal structures to the plasma membrane. With KANK1 co-organize the assembly of cortical microtubule stabilizing complexes (CMSCs) positioned to control microtubule-actin crosstalk at focal adhesions (FAs) rims. The polypeptide is Talin-1 (Tln1) (Mus musculus (Mouse)).